Reading from the N-terminus, the 256-residue chain is Ribosomal RNA small subunit methyltransferase A (256 aa).

Residues Asn12, Leu14, Gly39, Glu60, Asp85, and Asn103 each coordinate S-adenosyl-L-methionine.

This sequence belongs to the class I-like SAM-binding methyltransferase superfamily. rRNA adenine N(6)-methyltransferase family. RsmA subfamily.

The protein localises to the cytoplasm. The enzyme catalyses adenosine(1518)/adenosine(1519) in 16S rRNA + 4 S-adenosyl-L-methionine = N(6)-dimethyladenosine(1518)/N(6)-dimethyladenosine(1519) in 16S rRNA + 4 S-adenosyl-L-homocysteine + 4 H(+). Specifically dimethylates two adjacent adenosines (A1518 and A1519) in the loop of a conserved hairpin near the 3'-end of 16S rRNA in the 30S particle. May play a critical role in biogenesis of 30S subunits. This is Ribosomal RNA small subunit methyltransferase A from Legionella pneumophila subsp. pneumophila (strain Philadelphia 1 / ATCC 33152 / DSM 7513).